A 207-amino-acid polypeptide reads, in one-letter code: ATP-dependent Clp protease proteolytic subunit (207 aa).

Ser111 serves as the catalytic Nucleophile. His136 is a catalytic residue.

It belongs to the peptidase S14 family. Fourteen ClpP subunits assemble into 2 heptameric rings which stack back to back to give a disk-like structure with a central cavity, resembling the structure of eukaryotic proteasomes.

It is found in the cytoplasm. The catalysed reaction is Hydrolysis of proteins to small peptides in the presence of ATP and magnesium. alpha-casein is the usual test substrate. In the absence of ATP, only oligopeptides shorter than five residues are hydrolyzed (such as succinyl-Leu-Tyr-|-NHMec, and Leu-Tyr-Leu-|-Tyr-Trp, in which cleavage of the -Tyr-|-Leu- and -Tyr-|-Trp bonds also occurs).. Functionally, cleaves peptides in various proteins in a process that requires ATP hydrolysis. Has a chymotrypsin-like activity. Plays a major role in the degradation of misfolded proteins. In Aliivibrio salmonicida (strain LFI1238) (Vibrio salmonicida (strain LFI1238)), this protein is ATP-dependent Clp protease proteolytic subunit.